The chain runs to 197 residues: Probable GTP-binding protein EngB (197 aa).

In terms of domain architecture, EngB-type G spans 25–197 (SAPEIAFAGR…VRDEFFKFTR (173 aa)). Residues 33 to 40 (GRSNVGKS), 60 to 64 (GCTRQ), 79 to 82 (DLPG), 146 to 149 (TKID), and 177 to 179 (ISI) each bind GTP. Serine 40 and threonine 62 together coordinate Mg(2+).

This sequence belongs to the TRAFAC class TrmE-Era-EngA-EngB-Septin-like GTPase superfamily. EngB GTPase family. The cofactor is Mg(2+).

In terms of biological role, necessary for normal cell division and for the maintenance of normal septation. This is Probable GTP-binding protein EngB from Wolbachia pipientis subsp. Culex pipiens (strain wPip).